The primary structure comprises 270 residues: Ribosomal RNA-processing protein 7 homolog (270 aa).

Residues 233–268 are a coiled coil; that stretch reads TFQIKKNRQEKAQELLKKFEEDRKRITQLKQARNFK.

The protein belongs to the RRP7 family.

This chain is Ribosomal RNA-processing protein 7 homolog, found in Caenorhabditis elegans.